Reading from the N-terminus, the 490-residue chain is MANYFNTLPLREQLAQLAKCRFMDSSEFADGVEALKGKKMVVIGCGAQGLNQGLNLRDSGLDVSYALRPEAIAQKRQSWKNATENGFVVGTYEELIPTADVVLNLTPDKQHTPVVKAVMPLMKEGACLSYSHGFNIVEEGMQIREDLTVIMVAPKCPGSEVRAEYVRGFGVPTLIAVHEDNDPKGEGLALAKAYAVGTGGHKAGVLMSSFIAEVKSDLMGEQTILCGMLQTGSILCFDKMVEEGIDAGYASRLIQYGWETITEALKYGGVTNMLDRLSNPAKIKAFDLSEELKVIMRPLYNKHQDDIISGHFSQTMMEDWANDDKNLLQWRADTAETNFEKTPAGDVEISEQEFFDNGILMVAMVKAGVELAFETMTAAGIIAESAYYESLHETPLIANTIARKKLYEMNATISDTAEYGCYLYNHACVPLLADFMKDIKTDVIGKGLSVEDNGVDNARLIEVNKALRSHPVEAVGAVLRGHMADMKKIV.

The region spanning 18–208 (AKCRFMDSSE…GGHKAGVLMS (191 aa)) is the KARI N-terminal Rossmann domain. NADP(+) contacts are provided by residues 45 to 48 (CGAQ), Arg68, Arg76, Ser78, and 108 to 110 (DKQ). Residue His132 is part of the active site. NADP(+) is bound at residue Gly158. KARI C-terminal knotted domains follow at residues 209 to 344 (SFIA…KTPA) and 345 to 486 (GDVE…MADM). 4 residues coordinate Mg(2+): Asp217, Glu221, Glu389, and Glu393. Ser414 is a binding site for substrate.

Belongs to the ketol-acid reductoisomerase family. It depends on Mg(2+) as a cofactor.

It carries out the reaction (2R)-2,3-dihydroxy-3-methylbutanoate + NADP(+) = (2S)-2-acetolactate + NADPH + H(+). It catalyses the reaction (2R,3R)-2,3-dihydroxy-3-methylpentanoate + NADP(+) = (S)-2-ethyl-2-hydroxy-3-oxobutanoate + NADPH + H(+). Its pathway is amino-acid biosynthesis; L-isoleucine biosynthesis; L-isoleucine from 2-oxobutanoate: step 2/4. It participates in amino-acid biosynthesis; L-valine biosynthesis; L-valine from pyruvate: step 2/4. In terms of biological role, involved in the biosynthesis of branched-chain amino acids (BCAA). Catalyzes an alkyl-migration followed by a ketol-acid reduction of (S)-2-acetolactate (S2AL) to yield (R)-2,3-dihydroxy-isovalerate. In the isomerase reaction, S2AL is rearranged via a Mg-dependent methyl migration to produce 3-hydroxy-3-methyl-2-ketobutyrate (HMKB). In the reductase reaction, this 2-ketoacid undergoes a metal-dependent reduction by NADPH to yield (R)-2,3-dihydroxy-isovalerate. This Marinomonas sp. (strain MWYL1) protein is Ketol-acid reductoisomerase (NADP(+)).